Consider the following 49-residue polypeptide: Large ribosomal subunit protein bL33A (49 aa).

The protein belongs to the bacterial ribosomal protein bL33 family.

The protein is Large ribosomal subunit protein bL33A of Staphylococcus saprophyticus subsp. saprophyticus (strain ATCC 15305 / DSM 20229 / NCIMB 8711 / NCTC 7292 / S-41).